The following is a 418-amino-acid chain: MYKKIKLRDQQISELINLESKRQNSQIELIASENYASEDVILANGTSLSNKYGEGYPGKRYYGGCTFIDQIEKIAIERVKKLFKIEYANVQPYSGSSANAAVFAALLKPGDKILGLDLNAGGHLSHGYKINFSGMFYSGISYFLDENELLDYDAIEKIALKTKPNLIICGYSAYSRKIDFARFRQIADKVNAFLLADIAHIAGLIAAGQHPSPVGYAHIITSTTQKTLRGPRGGLILTNSKEIAAKIDKVVFPGIQGGPFFHTIAAKAVAFKEALEPWFKEYCAQIVKNASHFASEFIKKGIRIVSQGTENHLFTIDVLSSYNLNGKQAQILLESVNIITNKNTIPNDTLSPFVTSGLRLGTPAMTSRGFKEQEFSQMAEIIDFVLRKKELNALEIKEIKKKVKILTKNFPIKKSYWP.

Residues Leu118 and 122-124 (GHL) contribute to the (6S)-5,6,7,8-tetrahydrofolate site. An N6-(pyridoxal phosphate)lysine modification is found at Lys226. 351–353 (SPF) contacts (6S)-5,6,7,8-tetrahydrofolate.

Belongs to the SHMT family. As to quaternary structure, homodimer. Requires pyridoxal 5'-phosphate as cofactor.

Its subcellular location is the cytoplasm. The catalysed reaction is (6R)-5,10-methylene-5,6,7,8-tetrahydrofolate + glycine + H2O = (6S)-5,6,7,8-tetrahydrofolate + L-serine. Its pathway is one-carbon metabolism; tetrahydrofolate interconversion. In terms of biological role, catalyzes the reversible interconversion of serine and glycine with tetrahydrofolate (THF) serving as the one-carbon carrier. This reaction serves as the major source of one-carbon groups required for the biosynthesis of purines, thymidylate, methionine, and other important biomolecules. This Mesomycoplasma hyopneumoniae (strain 232) (Mycoplasma hyopneumoniae) protein is Probable serine hydroxymethyltransferase.